The primary structure comprises 366 residues: Holliday junction branch migration complex subunit RuvB (366 aa).

The segment at 3 to 183 is large ATPase domain (RuvB-L); that stretch reads ADGLVSAAAS…FGFTAHLDFY (181 aa). Residues L22, R23, G64, K67, T68, S69, 130–132, R173, Y183, and R220 contribute to the ATP site; that span reads EDF. Mg(2+) is bound at residue T68. Positions 184–254 are small ATPAse domain (RuvB-S); sequence APDELARVLT…VARAALRIYD (71 aa). Positions 257 to 366 are head domain (RuvB-H); sequence GLGLDRLDRA…PEDGLHPGGG (110 aa). DNA contacts are provided by R312 and R317.

The protein belongs to the RuvB family. As to quaternary structure, homohexamer. Forms an RuvA(8)-RuvB(12)-Holliday junction (HJ) complex. HJ DNA is sandwiched between 2 RuvA tetramers; dsDNA enters through RuvA and exits via RuvB. An RuvB hexamer assembles on each DNA strand where it exits the tetramer. Each RuvB hexamer is contacted by two RuvA subunits (via domain III) on 2 adjacent RuvB subunits; this complex drives branch migration. In the full resolvosome a probable DNA-RuvA(4)-RuvB(12)-RuvC(2) complex forms which resolves the HJ.

It localises to the cytoplasm. It catalyses the reaction ATP + H2O = ADP + phosphate + H(+). Functionally, the RuvA-RuvB-RuvC complex processes Holliday junction (HJ) DNA during genetic recombination and DNA repair, while the RuvA-RuvB complex plays an important role in the rescue of blocked DNA replication forks via replication fork reversal (RFR). RuvA specifically binds to HJ cruciform DNA, conferring on it an open structure. The RuvB hexamer acts as an ATP-dependent pump, pulling dsDNA into and through the RuvAB complex. RuvB forms 2 homohexamers on either side of HJ DNA bound by 1 or 2 RuvA tetramers; 4 subunits per hexamer contact DNA at a time. Coordinated motions by a converter formed by DNA-disengaged RuvB subunits stimulates ATP hydrolysis and nucleotide exchange. Immobilization of the converter enables RuvB to convert the ATP-contained energy into a lever motion, pulling 2 nucleotides of DNA out of the RuvA tetramer per ATP hydrolyzed, thus driving DNA branch migration. The RuvB motors rotate together with the DNA substrate, which together with the progressing nucleotide cycle form the mechanistic basis for DNA recombination by continuous HJ branch migration. Branch migration allows RuvC to scan DNA until it finds its consensus sequence, where it cleaves and resolves cruciform DNA. The sequence is that of Holliday junction branch migration complex subunit RuvB from Frankia alni (strain DSM 45986 / CECT 9034 / ACN14a).